The sequence spans 365 residues: 2-aminoethylphosphonate--pyruvate transaminase (365 aa).

K194 carries the N6-(pyridoxal phosphate)lysine modification.

This sequence belongs to the class-V pyridoxal-phosphate-dependent aminotransferase family. PhnW subfamily. In terms of assembly, homodimer. Requires pyridoxal 5'-phosphate as cofactor.

It catalyses the reaction (2-aminoethyl)phosphonate + pyruvate = phosphonoacetaldehyde + L-alanine. Its function is as follows. Involved in phosphonate degradation. The sequence is that of 2-aminoethylphosphonate--pyruvate transaminase from Bacillus thuringiensis (strain Al Hakam).